The chain runs to 674 residues: tRNA-guanine(15) transglycosylase (674 aa).

The active-site Nucleophile is the aspartate 90. Residues aspartate 125 and alanine 192 each coordinate substrate. Zn(2+) contacts are provided by cysteine 275, cysteine 277, and cysteine 280. The 76-residue stretch at 596-671 (HNRVVVSEDS…QAIKTRKWKK (76 aa)) folds into the PUA domain.

It belongs to the archaeosine tRNA-ribosyltransferase family. It depends on Zn(2+) as a cofactor.

The enzyme catalyses guanosine(15) in tRNA + 7-cyano-7-deazaguanine = 7-cyano-7-carbaguanosine(15) in tRNA + guanine. It functions in the pathway tRNA modification; archaeosine-tRNA biosynthesis. Exchanges the guanine residue with 7-cyano-7-deazaguanine (preQ0) at position 15 in the dihydrouridine loop (D-loop) of archaeal tRNAs. The chain is tRNA-guanine(15) transglycosylase from Methanosphaera stadtmanae (strain ATCC 43021 / DSM 3091 / JCM 11832 / MCB-3).